The following is a 420-amino-acid chain: LanC-like protein 3 (420 aa).

It belongs to the LanC-like protein family.

The sequence is that of LanC-like protein 3 (Lancl3) from Mus musculus (Mouse).